The following is a 23-amino-acid chain: Profilin (23 aa).

It belongs to the profilin family. Occurs in many kinds of cells as a complex with monomeric actin in a 1:1 ratio.

Its subcellular location is the cytoplasm. It is found in the cytoskeleton. Its function is as follows. Binds to actin and affects the structure of the cytoskeleton. At high concentrations, profilin prevents the polymerization of actin, whereas it enhances it at low concentrations. By binding to PIP2, it inhibits the formation of IP3 and DG. This Beta vulgaris (Sugar beet) protein is Profilin.